Here is a 293-residue protein sequence, read N- to C-terminus: Caspase-6 (293 aa).

Residues 1–20 are disordered; sequence MSSEPPPRRARGPGEEQNMT. The propeptide occupies 1 to 23; sequence MSSEPPPRRARGPGEEQNMTEID. Positions 42 to 44 are tri-arginine exosite; sequence KRR. S79 bears the Phosphoserine mark. H121 is a catalytic residue. The interval 125-142 is 130's region; it reads NHIYAYDAKIEIQTLTGL. The active site involves C163. Residues 180–193 constitute a propeptide that is removed on maturation; sequence HRTDTPDANLTQVD. A Phosphoserine modification is found at S257. 2 S-palmitoyl cysteine lipidation sites follow: C264 and C277.

This sequence belongs to the peptidase C14A family. Heterotetramer that consists of two anti-parallel arranged heterodimers, each one formed by a 18 kDa (p18) and a 11 kDa (p11) subunits. Interacts with BIRC6/bruce. Interacts with RIPK3. In terms of assembly, heterotetramer that consists of two anti-parallel arranged heterodimers, each one formed by a 18 kDa (Caspase-6 subunit p18) and a 11 kDa (Caspase-6 subunit p11) subunit. In terms of processing, phosphorylated by NUAK1; phosphorylation inhibits self-activation. Phosphorylation at Ser-257 by AMP-activated protein kinase (PRKAA1 or PRKAA2) inhibits autocleavage, preventing caspase activation, thereby preventing hepatocyte apoptosis. Palmitoylation by ZDHHC17 blocks dimerization and subsequent activation, leading to inhibit the cysteine protease activity. Post-translationally, can be cleaved and activated by different caspases, depending on the context. Cleaved and activated by caspase-8 (CASP8) and subsequently by caspase-3 (CASP3). Can also undergo autoactivation by mediating autocleavage at Asp-179 and Asp-193, while it is not able to cleave its N-terminal disordered prodomain. Cleaved and activated by CASP1, possibly in the context of inflammation.

It is found in the cytoplasm. Its subcellular location is the nucleus. It carries out the reaction Strict requirement for Asp at position P1 and has a preferred cleavage sequence of Val-Glu-His-Asp-|-.. With respect to regulation, during activation, the N-terminal disordered prodomain is removed by cleavage. Concomitantly, double cleavage gives rise to a large 18-kDa and a small 11-kDa subunit. The two large and two small subunits then assemble to form the active CASP6 complex. Can be cleaved and activated by different caspases, depending on the context. Cleaved and activated by caspase-8 (CASP8) and subsequently by caspase-3 (CASP3). Can also undergo autoactivation by mediating autocleavage at Asp-179 and Asp-193, while it is not able to cleave its N-terminal disordered prodomain. Intramolecular cleavage at Asp-193 is a prerequisite for CASP6 self-activation. Cleaved and activated by CASP1 in neurons, possibly in the context of inflammation. Phosphorylation at Ser-257 inhibits autocleavage, preventing caspase activation. In terms of biological role, cysteine protease that plays essential roles in programmed cell death, axonal degeneration, development and innate immunity. Acts as a non-canonical executioner caspase during apoptosis: localizes in the nucleus and cleaves the nuclear structural protein NUMA1 and lamin A/LMNA thereby inducing nuclear shrinkage and fragmentation. Lamin-A/LMNA cleavage is required for chromatin condensation and nuclear disassembly during apoptotic execution. Acts as a regulator of liver damage by promoting hepatocyte apoptosis: in absence of phosphorylation by AMP-activated protein kinase (AMPK), catalyzes cleavage of BID, leading to cytochrome c release, thereby participating in nonalcoholic steatohepatitis. Cleaves PARK7/DJ-1 in cells undergoing apoptosis. Involved in intrinsic apoptosis by mediating cleavage of RIPK1. Furthermore, cleaves many transcription factors such as NF-kappa-B and cAMP response element-binding protein/CREBBP. Cleaves phospholipid scramblase proteins XKR4 and XKR9. In addition to apoptosis, involved in different forms of programmed cell death. Plays an essential role in defense against viruses by acting as a central mediator of the ZBP1-mediated pyroptosis, apoptosis, and necroptosis (PANoptosis), independently of its cysteine protease activity. PANoptosis is a unique inflammatory programmed cell death, which provides a molecular scaffold that allows the interactions and activation of machinery required for inflammasome/pyroptosis, apoptosis and necroptosis. Mechanistically, interacts with RIPK3 and enhances the interaction between RIPK3 and ZBP1, leading to ZBP1-mediated inflammasome activation and cell death. Plays an essential role in axon degeneration during axon pruning which is the remodeling of axons during neurogenesis but not apoptosis. Regulates B-cell programs both during early development and after antigen stimulation. The protein is Caspase-6 of Bos taurus (Bovine).